The chain runs to 236 residues: Biosynthetic peptidoglycan transglycosylase (236 aa).

The chain crosses the membrane as a helical span at residues 12–31 (ALLWFAAGSALVVLVLRWVP).

It belongs to the glycosyltransferase 51 family.

The protein localises to the cell inner membrane. The enzyme catalyses [GlcNAc-(1-&gt;4)-Mur2Ac(oyl-L-Ala-gamma-D-Glu-L-Lys-D-Ala-D-Ala)](n)-di-trans,octa-cis-undecaprenyl diphosphate + beta-D-GlcNAc-(1-&gt;4)-Mur2Ac(oyl-L-Ala-gamma-D-Glu-L-Lys-D-Ala-D-Ala)-di-trans,octa-cis-undecaprenyl diphosphate = [GlcNAc-(1-&gt;4)-Mur2Ac(oyl-L-Ala-gamma-D-Glu-L-Lys-D-Ala-D-Ala)](n+1)-di-trans,octa-cis-undecaprenyl diphosphate + di-trans,octa-cis-undecaprenyl diphosphate + H(+). It functions in the pathway cell wall biogenesis; peptidoglycan biosynthesis. Functionally, peptidoglycan polymerase that catalyzes glycan chain elongation from lipid-linked precursors. The sequence is that of Biosynthetic peptidoglycan transglycosylase from Pseudomonas syringae pv. tomato (strain ATCC BAA-871 / DC3000).